A 222-amino-acid polypeptide reads, in one-letter code: MSGLGRLFGRGKKEKGPTPEEAIQKLKETEKILIKKQEFLEQKIEQELQAAKKHGTKNKRAALQALRRKKRLEQQLAQTDGTLSTLEFQREAIENATTNAEVLRTMELAAQGLKKAYQDMDIDKVDELMADITEQQEVAQQISDAISRPVGFGDDVDEDELLEELEELEQEELARELLHVGDEEEEPPVALPSAPSTHLPAEPAPKADEDEAELKQLAEWVS.

Disordered regions lie at residues 1 to 21 and 177 to 222; these read MSGL…TPEE and LLHV…EWVS. Residues 1–116 form an interaction with phosphoinosides region; that stretch reads MSGLGRLFGR…ELAAQGLKKA (116 aa). Positions 1 to 150 are intramolecular interaction with C-terminus; it reads MSGLGRLFGR…QISDAISRPV (150 aa). Coiled coils occupy residues 20-105 and 155-180; these read EEAI…VLRT and DVDE…LLHV. The interval 151–222 is intramolecular interaction with N-terminus; that stretch reads GFGDDVDEDE…ELKQLAEWVS (72 aa). Ser-196 bears the Phosphoserine mark.

It belongs to the SNF7 family. In terms of assembly, probable core component of the endosomal sorting required for transport complex III (ESCRT-III). ESCRT-III components are thought to multimerize to form a flat lattice on the perimeter membrane of the endosome. Several assembly forms of ESCRT-III may exist that interact and act sequentially. Self-associates; overexpression leads to the assembly of filaments that curve and associate to create circular rings. Interacts with CHMP2A. Interacts with CHMP3; the interaction requires the release of CHMP4A autoinhibition. Interacts with CHMP4B. Interacts with CHMP4C. Interacts with CHMP6. Interacts with VPS4A. Interacts with PDCD6IP; the interaction is direct.

It is found in the cytoplasmic vesicle membrane. The protein localises to the late endosome membrane. Functionally, probable core component of the endosomal sorting required for transport complex III (ESCRT-III) which is involved in multivesicular bodies (MVBs) formation and sorting of endosomal cargo proteins into MVBs. MVBs contain intraluminal vesicles (ILVs) that are generated by invagination and scission from the limiting membrane of the endosome and mostly are delivered to lysosomes enabling degradation of membrane proteins, such as stimulated growth factor receptors, lysosomal enzymes and lipids. The MVB pathway appears to require the sequential function of ESCRT-O, -I,-II and -III complexes. ESCRT-III proteins mostly dissociate from the invaginating membrane before the ILV is released. The ESCRT machinery also functions in topologically equivalent membrane fission events, such as the terminal stages of cytokinesis and the budding of enveloped viruses (lentiviruses). ESCRT-III proteins are believed to mediate the necessary vesicle extrusion and/or membrane fission activities, possibly in conjunction with the AAA ATPase VPS4. When overexpressed, membrane-assembled circular arrays of CHMP4A filaments can promote or stabilize negative curvature and outward budding. CHMP4A/B/C are required for the exosomal release of SDCBP, CD63 and syndecan. This chain is Charged multivesicular body protein 4a (CHMP4A), found in Bos taurus (Bovine).